A 516-amino-acid polypeptide reads, in one-letter code: Thioredoxin reductase 2, mitochondrial (516 aa).

62–79 (DYVKPTPVGTKWGIGGTC) is a binding site for FAD. Cysteines 79 and 84 form a disulfide. The Proton acceptor role is filled by His489.

This sequence belongs to the class-I pyridine nucleotide-disulfide oxidoreductase family. As to quaternary structure, homodimer. FAD is required as a cofactor.

The protein localises to the mitochondrion. The enzyme catalyses [thioredoxin]-dithiol + NADP(+) = [thioredoxin]-disulfide + NADPH + H(+). Thioredoxin system is a major player in glutathione metabolism, due to the demonstrated absence of a glutathione reductase. Functionally interacts with the Sod/Cat reactive oxidation species (ROS) defense system and thereby has a role in preadult development and life span. Lack of a glutathione reductase suggests antioxidant defense in Drosophila, and probably in related insects, differs fundamentally from that in other organisms. This is Thioredoxin reductase 2, mitochondrial from Drosophila melanogaster (Fruit fly).